The primary structure comprises 64 residues: Large ribosomal subunit protein bL32 (64 aa).

Residues 1–16 (MAVPKHRKSKAKKRSR) show a composition bias toward basic residues. Residues 1 to 22 (MAVPKHRKSKAKKRSRQAANDK) are disordered.

The protein belongs to the bacterial ribosomal protein bL32 family.

This chain is Large ribosomal subunit protein bL32, found in Brachyspira hyodysenteriae (strain ATCC 49526 / WA1).